The primary structure comprises 427 residues: UPF0229 protein bll6755 (427 aa).

The segment at 86–107 (DYLQRSGQGSAKDSGPGEGDSE) is disordered.

This sequence belongs to the UPF0229 family.

This is UPF0229 protein bll6755 from Bradyrhizobium diazoefficiens (strain JCM 10833 / BCRC 13528 / IAM 13628 / NBRC 14792 / USDA 110).